The primary structure comprises 386 residues: DNA replication and repair protein RecF (386 aa).

30 to 37 serves as a coordination point for ATP; sequence GANAQGKT.

It belongs to the RecF family.

The protein resides in the cytoplasm. In terms of biological role, the RecF protein is involved in DNA metabolism; it is required for DNA replication and normal SOS inducibility. RecF binds preferentially to single-stranded, linear DNA. It also seems to bind ATP. This is DNA replication and repair protein RecF from Natranaerobius thermophilus (strain ATCC BAA-1301 / DSM 18059 / JW/NM-WN-LF).